Here is a 373-residue protein sequence, read N- to C-terminus: Histidinol-phosphate aminotransferase (373 aa).

An N6-(pyridoxal phosphate)lysine modification is found at Lys-233.

The protein belongs to the class-II pyridoxal-phosphate-dependent aminotransferase family. Histidinol-phosphate aminotransferase subfamily. In terms of assembly, homodimer. Pyridoxal 5'-phosphate serves as cofactor.

It carries out the reaction L-histidinol phosphate + 2-oxoglutarate = 3-(imidazol-4-yl)-2-oxopropyl phosphate + L-glutamate. It participates in amino-acid biosynthesis; L-histidine biosynthesis; L-histidine from 5-phospho-alpha-D-ribose 1-diphosphate: step 7/9. In Nitratidesulfovibrio vulgaris (strain DP4) (Desulfovibrio vulgaris), this protein is Histidinol-phosphate aminotransferase.